We begin with the raw amino-acid sequence, 115 residues long: U3-lycotoxin-Ls1a (115 aa).

Positions 1–20 are cleaved as a signal peptide; sequence MKFVLLFGVLLVTLFSYSSA. A propeptide spanning residues 21–44 is cleaved from the precursor; it reads EMLDDFDQADEEELLSLIEKEEAR. 4 disulfides stabilise this stretch: Cys-48–Cys-63, Cys-55–Cys-72, Cys-62–Cys-87, and Cys-74–Cys-85.

This sequence belongs to the neurotoxin 19 (CSTX) family. 01 subfamily. Expressed by the venom gland.

The protein resides in the secreted. This is U3-lycotoxin-Ls1a from Lycosa singoriensis (Wolf spider).